The primary structure comprises 110 residues: G antigen 2E (110 aa).

Residues M1–E110 are disordered. Composition is skewed to acidic residues over residues F32 to E45 and E87 to E96.

The protein belongs to the GAGE family.

The polypeptide is G antigen 2E (GAGE2E) (Homo sapiens (Human)).